The chain runs to 311 residues: Pseudouridine-5'-phosphate glycosidase (311 aa).

The active-site Proton donor is Glu32. Positions 96 and 116 each coordinate substrate. Residue Asp148 coordinates Mn(2+). Residue 150–152 coordinates substrate; it reads SAD. Lys169 functions as the Nucleophile in the catalytic mechanism.

This sequence belongs to the pseudouridine-5'-phosphate glycosidase family. In terms of assembly, homotrimer. Requires Mn(2+) as cofactor.

It catalyses the reaction D-ribose 5-phosphate + uracil = psi-UMP + H2O. Catalyzes the reversible cleavage of pseudouridine 5'-phosphate (PsiMP) to ribose 5-phosphate and uracil. Functions biologically in the cleavage direction, as part of a pseudouridine degradation pathway. In Roseiflexus sp. (strain RS-1), this protein is Pseudouridine-5'-phosphate glycosidase.